A 293-amino-acid chain; its full sequence is tRNA pseudouridine synthase B (293 aa).

Asp-39 (nucleophile) is an active-site residue.

It belongs to the pseudouridine synthase TruB family. Type 1 subfamily.

It catalyses the reaction uridine(55) in tRNA = pseudouridine(55) in tRNA. Functionally, responsible for synthesis of pseudouridine from uracil-55 in the psi GC loop of transfer RNAs. This Streptococcus mutans serotype c (strain ATCC 700610 / UA159) protein is tRNA pseudouridine synthase B.